Consider the following 249-residue polypeptide: MVEMNFKVDAFEGPLDLLLHLIGQLEVDIYDIPMAEITDQYMEFVHTMQEMELDVASEYLVMAATLLAIKSKMLLPKQELEIDYDTLEEEEDPRDALVEKLMEYKRFKEAAKELKEKEAERSFYFSKPPMDLAEYDDGTKVAELDVSLNDMLSAFNKMLRRKKLNKPLHTRITTQEISIDERMDSVLGKLHQQVNHRLRFDELFEEQTKEQLVVTFLALLELMKRKLVEVEQAESFADLYVQGKGEELS.

This sequence belongs to the ScpA family. In terms of assembly, component of a cohesin-like complex composed of ScpA, ScpB and the Smc homodimer, in which ScpA and ScpB bind to the head domain of Smc. The presence of the three proteins is required for the association of the complex with DNA.

It is found in the cytoplasm. Its function is as follows. Participates in chromosomal partition during cell division. May act via the formation of a condensin-like complex containing Smc and ScpB that pull DNA away from mid-cell into both cell halves. This Listeria monocytogenes serotype 4a (strain HCC23) protein is Segregation and condensation protein A.